The sequence spans 208 residues: 3-isopropylmalate dehydratase small subunit 2 (208 aa).

Residues 163–208 form a disordered region; that stretch reads EGERLDNASTSAGHGHAGTPLGDDPAKEDGPRPEQASGHQKEEHHA.

The protein belongs to the LeuD family. LeuD type 2 subfamily. Heterodimer of LeuC and LeuD.

The catalysed reaction is (2R,3S)-3-isopropylmalate = (2S)-2-isopropylmalate. Its pathway is amino-acid biosynthesis; L-leucine biosynthesis; L-leucine from 3-methyl-2-oxobutanoate: step 2/4. Its function is as follows. Catalyzes the isomerization between 2-isopropylmalate and 3-isopropylmalate, via the formation of 2-isopropylmaleate. The chain is 3-isopropylmalate dehydratase small subunit 2 (leuD2) from Deinococcus radiodurans (strain ATCC 13939 / DSM 20539 / JCM 16871 / CCUG 27074 / LMG 4051 / NBRC 15346 / NCIMB 9279 / VKM B-1422 / R1).